The following is a 178-amino-acid chain: Interleukin-1 receptor antagonist protein (178 aa).

Positions 1-26 (MEICRGPYSHLISLLLILLFRSESAG) are cleaved as a signal peptide. An intrachain disulfide couples Cys92 to Cys142. Asn110 carries an N-linked (GlcNAc...) asparagine glycan.

Belongs to the IL-1 family.

It localises to the secreted. Anti-inflammatory antagonist of interleukin-1 family of proinflammatory cytokines such as interleukin-1beta/IL1B and interleukin-1alpha/IL1A. Protects from immune dysregulation and uncontrolled systemic inflammation triggered by IL1 for a range of innate stimulatory agents such as pathogens. The sequence is that of Interleukin-1 receptor antagonist protein (Il1rn) from Rattus norvegicus (Rat).